Here is a 69-residue protein sequence, read N- to C-terminus: Light-harvesting polypeptide B-800/860 alpha chain (69 aa).

Over 1–14 the chain is Cytoplasmic; it reads MTNGKIWLVVKPTV. A helical transmembrane segment spans residues 15-35; the sequence is GLPIGMLFAALLAVLIHGLLF. Histidine 31 provides a ligand contact to a bacteriochlorophyll. The Periplasmic segment spans residues 36 to 69; that stretch reads VDGRLKSWWSEFPVAKPAVVSVQAAPAPVAAEVK.

The protein belongs to the antenna complex alpha subunit family. As to quaternary structure, the core complex is formed by different alpha and beta chains, binding bacteriochlorophyll molecules, and arranged most probably in tetrameric structures disposed around the reaction center. The non-pigmented gamma chains may constitute additional components.

It localises to the cell inner membrane. Its function is as follows. Antenna complexes are light-harvesting systems, which transfer the excitation energy to the reaction centers. The chain is Light-harvesting polypeptide B-800/860 alpha chain from Rhodocyclus tenuis (Rhodospirillum tenue).